Reading from the N-terminus, the 350-residue chain is uncharacterized protein (350 aa).

3 disordered regions span residues 1–21 (MDSF…SSLN), 237–266 (NSDV…PISP), and 278–298 (EMST…KKRT). Composition is skewed to polar residues over residues 10–21 (KPTTATSNSSLN) and 246–259 (EDSS…TKPS). Residues 287–298 (SRSRTPSSKKRT) show a composition bias toward basic residues.

It localises to the nucleus. This is an uncharacterized protein from Schizosaccharomyces pombe (strain 972 / ATCC 24843) (Fission yeast).